A 292-amino-acid chain; its full sequence is MTSLNIMGRKFILERAKRNDNIEEIYTSAYVSLPSSTDTRLPHFKAKEEDCDVYEEGTNLVGKNAKYTYRSLGRHLDFLRPGLRFGGSQSSKYTYYTVEVKIDTVNLPLYKDSRSLDPHVTGTFTIKNLTPVLDKVVTLFEGYVINYNQFPLCSLHWPAEETLDPYMAQRESDCSHWKRFGHFGSDNWSLTERNFGQYNHESAEFMNQRYIYLKWKERFLLDDEEQENLMLDDNHHLEGASFEGFYYVCLDQLTGSVEGYYYHPACELFQKLELVPTNCDALNTYSSGFEIA.

This sequence belongs to the GID4/VID24 family. In terms of assembly, substrate-recognition component of the GID/CTLH ubiquitin ligase complex. In the absence of stress, the complex exists as an inactive anticipatory complex (GID(Ant)), composed of VID30/GID1, the E3 ubiquitin-ligase RMD5/GID2, VID28/GID5, GID8, and the RING-like subunit FYV10/GID9, awaiting a substrate receptor to form the active E3 ligase complex. When cells are shifted to glucose-containing medium, the substrate receptor VID24/GID4 is induced and becomes part of the complex, named GID(SR4). Under osmotic or heat stress, the substrate receptor GID10 is induced and becomes part of the complex, named GID(SR10). Interacts with proteins that have an N-terminal Pro/N-degron, including ART2.

In terms of biological role, substrate-recognition component of the GID E3 ligase complex recruiting N termini and catalyzing ubiquitination of proteins targeted for degradation. GID E3 is regulated through assembly with interchangeable N-degron-binding substrate receptors induced by distinct environmental perturbations. Required for the adaptation to osmotic or heat stress. Required for the regulation of protein levels of the adapter protein ART2, a component of the ART-Rsp5 ubiquitin ligase pathway, part of the plasma membrane quality control. Specific for substrates with an N-terminal Pro (Pro/N-degron), including ART2. Has high affinity for the N-terminal sequence Pro-Tyr-Ile-Thr, and also recognizes nonproline residues such as Met-Tyr-Ile-Thr-Val or Val-Cys-Phe-His. This is GID complex substrate-recognition subunit 10 from Saccharomyces cerevisiae (strain ATCC 204508 / S288c) (Baker's yeast).